Reading from the N-terminus, the 521-residue chain is MGLGRCIWEGWTLESEALRRDMGTWLLACICICTCVCLGVSVTGEGQGPRSRTFTCLTNNILRIDCHWSAPELGQGSSPWLLFTSNQAPGGTHKCILRGSECTVVLPPEAVLVPSDNFTITFHHCMSGREQVSLVDPEYLPRRHVKLDPPSDLQSNISSGHCILTWSISPALEPMTTLLSYELAFKKQEEAWEQAQHRDHIVGVTWLILEAFELDPGFIHEARLRVQMATLEDDVVEEERYTGQWSEWSQPVCFQAPQRQGPLIPPWGWPGNTLVAVSIFLLLTGPTYLLFKLSPRVKRIFYQNVPSPAMFFQPLYSVHNGNFQTWMGAHGAGVLLSQDCAGTPQGALEPCVQEATALLTCGPARPWKSVALEEEQEGPGTRLPGNLSSEDVLPAGCTEWRVQTLAYLPQEDWAPTSLTRPAPPDSEGSRSSSSSSSSNNNNYCALGCYGGWHLSALPGNTQSSGPIPALACGLSCDHQGLETQQGVAWVLAGHCQRPGLHEDLQGMLLPSVLSKARSWTF.

An N-terminal signal peptide occupies residues 1–40; it reads MGLGRCIWEGWTLESEALRRDMGTWLLACICICTCVCLGV. Topologically, residues 41–270 are extracellular; that stretch reads SVTGEGQGPR…GPLIPPWGWP (230 aa). N-linked (GlcNAc...) asparagine glycans are attached at residues N117 and N156. Residues 149–259 form the Fibronectin type-III domain; the sequence is PPSDLQSNIS…QPVCFQAPQR (111 aa). The WSXWS motif motif lies at 245–249; the sequence is WSEWS. Residues 271–291 form a helical membrane-spanning segment; it reads GNTLVAVSIFLLLTGPTYLLF. Residues 292–521 are Cytoplasmic-facing; the sequence is KLSPRVKRIF…VLSKARSWTF (230 aa). The Box 1 motif signature appears at 301–309; sequence FYQNVPSPA. The tract at residues 413–439 is disordered; that stretch reads WAPTSLTRPAPPDSEGSRSSSSSSSSN. Over residues 429–439 the composition is skewed to low complexity; sequence SRSSSSSSSSN.

This sequence belongs to the type I cytokine receptor family. Type 4 subfamily. As to quaternary structure, interacts with IL9.

It is found in the cell membrane. It localises to the secreted. Functionally, plays an important role in the immune response against parasites by acting as a receptor of IL9. In Homo sapiens (Human), this protein is Interleukin-9 receptor (IL9R).